A 126-amino-acid chain; its full sequence is Cytochrome c2 (126 aa).

Residues C17, C20, H21, and M101 each coordinate heme c.

The protein belongs to the cytochrome c family. Binds 1 heme c group covalently per subunit.

It is found in the periplasm. Cytochrome c2 is found mainly in purple, non-sulfur, photosynthetic bacteria where it functions as the electron donor to the oxidized bacteriochlorophyll in the photophosphorylation pathway. However, it may also have a role in the respiratory chain and is found in some non-photosynthetic bacteria. This chain is Cytochrome c2, found in Rhodovulum adriaticum (Rhodopseudomonas adriatica).